The primary structure comprises 89 residues: Elongation factor 1-beta (89 aa).

Belongs to the EF-1-beta/EF-1-delta family.

Its function is as follows. Promotes the exchange of GDP for GTP in EF-1-alpha/GDP, thus allowing the regeneration of EF-1-alpha/GTP that could then be used to form the ternary complex EF-1-alpha/GTP/AAtRNA. This is Elongation factor 1-beta from Methanosarcina acetivorans (strain ATCC 35395 / DSM 2834 / JCM 12185 / C2A).